The primary structure comprises 471 residues: Phosphatidylserine synthase 1 (471 aa).

A2 carries the post-translational modification N-acetylalanine. Residues 2–35 (ASCVGSRTLSKDDVNYRMHFRMINEQQVEDITID) are Cytoplasmic-facing. The chain crosses the membrane as a helical span at residues 36–56 (FFYRPHTITLLSFTIVSLMYF). Residues 57-72 (AFTRDDSVPEDNIWRG) lie on the Lumenal side of the membrane. The helical transmembrane segment at 73–93 (ILSVIFFFLIISVLAFPNGPF) threads the bilayer. The Cytoplasmic segment spans residues 94–102 (TRPHPALWR). A helical transmembrane segment spans residues 103–123 (MVFGLSVLYFLFLVFLLFLNF). The Lumenal portion of the chain corresponds to 124–160 (EQVKSLMYWLDPNLRYATREADIMEYAVNCHVITWER). A helical membrane pass occupies residues 161–181 (IVSHFDIFAFGHFWGWAMKAL). Topologically, residues 182–186 (LIRSY) are cytoplasmic. Residues 187-207 (GLCWTISITWELTELFFMHLL) traverse the membrane as a helical segment. The Lumenal portion of the chain corresponds to 208 to 216 (PNFAECWWD). A helical membrane pass occupies residues 217–237 (QVILDILLCNGGGIWLGMVVC). Residues 238-286 (RFLEMRTYHWASFKDIHTTTGKIKRAVLQFTPASWTYVRWFDPKSSFQR) lie on the Cytoplasmic side of the membrane. A helical transmembrane segment spans residues 287 to 307 (VAGVYLFMIIWQLTELNTFFL). The Lumenal segment spans residues 308 to 309 (KH). Residues 310-330 (IFVFQASHPLSWCRILFIGCI) form a helical membrane-spanning segment. The Cytoplasmic portion of the chain corresponds to 331–355 (TAPTVRQYYAYLTDTQCKRVGTQCW). A helical membrane pass occupies residues 356 to 376 (VFGVIGFLEAIVCIKFGQDLF). Topologically, residues 377-380 (SKTQ) are lumenal. The chain crosses the membrane as a helical span at residues 381–401 (ILYVVFWLLCVAFTTFLCLYG). The Cytoplasmic portion of the chain corresponds to 402–471 (MVWYAEHYGH…SKVTNGVGKK (70 aa)). S417, S440, and S452 each carry phosphoserine. The disordered stretch occupies residues 426-471 (ISWHHGKGSKGSEDSPPKHSSNNESHSSRRRNRHSKSKVTNGVGKK). Positions 453–462 (SRRRNRHSKS) are enriched in basic residues.

The protein belongs to the phosphatidyl serine synthase family.

The protein localises to the endoplasmic reticulum membrane. It catalyses the reaction a 1,2-diacyl-sn-glycero-3-phosphoethanolamine + L-serine = a 1,2-diacyl-sn-glycero-3-phospho-L-serine + ethanolamine. The catalysed reaction is a 1,2-diacyl-sn-glycero-3-phosphocholine + L-serine = a 1,2-diacyl-sn-glycero-3-phospho-L-serine + choline. The protein operates within phospholipid metabolism; phosphatidylserine biosynthesis. Inhibited by exogenous phosphatidylserine. Functionally, catalyzes a base-exchange reaction in which the polar head group of phosphatidylethanolamine (PE) or phosphatidylcholine (PC) is replaced by L-serine. Catalyzes mainly the conversion of phosphatidylcholine. Also converts, in vitro and to a lesser extent, phosphatidylethanolamine. This chain is Phosphatidylserine synthase 1 (PTDSS1), found in Cricetulus griseus (Chinese hamster).